The sequence spans 132 residues: Large ribosomal subunit protein bL12 (132 aa).

The protein belongs to the bacterial ribosomal protein bL12 family. As to quaternary structure, homodimer. Part of the ribosomal stalk of the 50S ribosomal subunit. Forms a multimeric L10(L12)X complex, where L10 forms an elongated spine to which 2 to 4 L12 dimers bind in a sequential fashion. Binds GTP-bound translation factors.

Functionally, forms part of the ribosomal stalk which helps the ribosome interact with GTP-bound translation factors. Is thus essential for accurate translation. The sequence is that of Large ribosomal subunit protein bL12 from Ehrlichia canis (strain Jake).